Here is a 401-residue protein sequence, read N- to C-terminus: Lipoyl synthase 1, mitochondrial (401 aa).

Residues 1 to 25 (MWSSSSSLCRNPSFRRAWLSTVTVT) constitute a mitochondrion transit peptide. Positions 49–79 (IDDFSSTNAPTTTTHYTSSNGSPIVRQKAAP) are disordered. The segment covering 51 to 70 (DFSSTNAPTTTTHYTSSNGS) has biased composition (polar residues). Cysteine 117, cysteine 122, cysteine 128, cysteine 148, cysteine 152, cysteine 155, and serine 376 together coordinate [4Fe-4S] cluster. The 233-residue stretch at 133–365 (EDQTATATIM…QETAMGMGFA (233 aa)) folds into the Radical SAM core domain.

This sequence belongs to the radical SAM superfamily. Lipoyl synthase family. It depends on [4Fe-4S] cluster as a cofactor.

The protein resides in the mitochondrion. The enzyme catalyses [[Fe-S] cluster scaffold protein carrying a second [4Fe-4S](2+) cluster] + N(6)-octanoyl-L-lysyl-[protein] + 2 oxidized [2Fe-2S]-[ferredoxin] + 2 S-adenosyl-L-methionine + 4 H(+) = [[Fe-S] cluster scaffold protein] + N(6)-[(R)-dihydrolipoyl]-L-lysyl-[protein] + 4 Fe(3+) + 2 hydrogen sulfide + 2 5'-deoxyadenosine + 2 L-methionine + 2 reduced [2Fe-2S]-[ferredoxin]. It participates in protein modification; protein lipoylation via endogenous pathway; protein N(6)-(lipoyl)lysine from octanoyl-[acyl-carrier-protein]: step 2/2. In terms of biological role, catalyzes the radical-mediated insertion of two sulfur atoms into the C-6 and C-8 positions of the octanoyl moiety bound to the lipoyl domains of lipoate-dependent enzymes, thereby converting the octanoylated domains into lipoylated derivatives. This is Lipoyl synthase 1, mitochondrial from Phaeodactylum tricornutum (strain CCAP 1055/1).